Here is a 551-residue protein sequence, read N- to C-terminus: GMP synthase [glutamine-hydrolyzing] (551 aa).

Positions 1–28 (MTSSPTAAARTEGEAAPTVPTQVESGTA) are disordered. The span at 19 to 28 (VPTQVESGTA) shows a compositional bias: polar residues. Residues 37 to 227 (MVAILDFGSQ…VYHICGCEPE (191 aa)) form the Glutamine amidotransferase type-1 domain. Cys114 functions as the Nucleophile in the catalytic mechanism. Catalysis depends on residues His201 and Glu203. In terms of domain architecture, GMPS ATP-PPase spans 228-426 (WTTAAFIEEA…LGLPEEIVQR (199 aa)). 255-261 (SGGVDSS) lines the ATP pocket.

As to quaternary structure, homodimer.

It carries out the reaction XMP + L-glutamine + ATP + H2O = GMP + L-glutamate + AMP + diphosphate + 2 H(+). It participates in purine metabolism; GMP biosynthesis; GMP from XMP (L-Gln route): step 1/1. In terms of biological role, catalyzes the synthesis of GMP from XMP. This chain is GMP synthase [glutamine-hydrolyzing], found in Gloeobacter violaceus (strain ATCC 29082 / PCC 7421).